Reading from the N-terminus, the 172-residue chain is NAD(P)H-quinone oxidoreductase subunit I, chloroplastic (172 aa).

2 4Fe-4S ferredoxin-type domains span residues 55-84 (GRIH…VDWK) and 95-124 (LNYS…MTEE). Positions 64, 67, 70, 74, 104, 107, 110, and 114 each coordinate [4Fe-4S] cluster.

The protein belongs to the complex I 23 kDa subunit family. NDH is composed of at least 16 different subunits, 5 of which are encoded in the nucleus. It depends on [4Fe-4S] cluster as a cofactor.

It localises to the plastid. The protein resides in the chloroplast thylakoid membrane. The enzyme catalyses a plastoquinone + NADH + (n+1) H(+)(in) = a plastoquinol + NAD(+) + n H(+)(out). The catalysed reaction is a plastoquinone + NADPH + (n+1) H(+)(in) = a plastoquinol + NADP(+) + n H(+)(out). Functionally, NDH shuttles electrons from NAD(P)H:plastoquinone, via FMN and iron-sulfur (Fe-S) centers, to quinones in the photosynthetic chain and possibly in a chloroplast respiratory chain. The immediate electron acceptor for the enzyme in this species is believed to be plastoquinone. Couples the redox reaction to proton translocation, and thus conserves the redox energy in a proton gradient. The protein is NAD(P)H-quinone oxidoreductase subunit I, chloroplastic of Crucihimalaya wallichii (Rock-cress).